A 409-amino-acid chain; its full sequence is Multifunctional CCA protein (409 aa).

Residues Gly-8 and Arg-11 each coordinate ATP. 2 residues coordinate CTP: Gly-8 and Arg-11. 2 residues coordinate Mg(2+): Glu-21 and Asp-23. The ATP site is built by Arg-91, Arg-137, and Arg-140. Residues Arg-91, Arg-137, and Arg-140 each coordinate CTP. The 102-residue stretch at 228 to 329 folds into the HD domain; the sequence is TGVHTLMVLT…LKALEGLDAF (102 aa).

This sequence belongs to the tRNA nucleotidyltransferase/poly(A) polymerase family. Bacterial CCA-adding enzyme type 1 subfamily. In terms of assembly, monomer. Can also form homodimers and oligomers. It depends on Mg(2+) as a cofactor. Requires Ni(2+) as cofactor.

It carries out the reaction a tRNA precursor + 2 CTP + ATP = a tRNA with a 3' CCA end + 3 diphosphate. The enzyme catalyses a tRNA with a 3' CCA end + 2 CTP + ATP = a tRNA with a 3' CCACCA end + 3 diphosphate. Functionally, catalyzes the addition and repair of the essential 3'-terminal CCA sequence in tRNAs without using a nucleic acid template. Adds these three nucleotides in the order of C, C, and A to the tRNA nucleotide-73, using CTP and ATP as substrates and producing inorganic pyrophosphate. tRNA 3'-terminal CCA addition is required both for tRNA processing and repair. Also involved in tRNA surveillance by mediating tandem CCA addition to generate a CCACCA at the 3' terminus of unstable tRNAs. While stable tRNAs receive only 3'-terminal CCA, unstable tRNAs are marked with CCACCA and rapidly degraded. The sequence is that of Multifunctional CCA protein from Thioalkalivibrio sulfidiphilus (strain HL-EbGR7).